A 261-amino-acid chain; its full sequence is Acidic leucine-rich nuclear phosphoprotein 32 family member B (261 aa).

4 LRR repeats span residues 16-40 (PAAVRELVLDNCKSNDGKIEGLTAE), 43-64 (NLEFLSLINVGLISVSNLPKLP), 65-87 (KLKKLELSDNRICGGLDMLAEKL), and 89-110 (NLTHLNLSGNKLKDIGTLEPLK). K86 bears the N6-acetyllysine mark. Positions 123 to 161 (CEVTNLNDYRESVFKLLPQLTYLDGYDREDREAPDSDAE) constitute an LRRCT domain. The interval 149-261 (DREDREAPDS…RETDDEGEDD (113 aa)) is disordered. Residues 157-243 (DSDAEVDGVD…DEDEDEEEEE (87 aa)) are compositionally biased toward acidic residues. S158 carries the post-translational modification Phosphoserine. The span at 244–254 (SGKGEGRKRET) shows a compositional bias: basic and acidic residues. T254 carries the post-translational modification Phosphothreonine.

The protein belongs to the ANP32 family. Monomer. Interacts with histones H3 and H4. In terms of processing, some glutamate residues are glycylated by TTLL8. This modification occurs exclusively on glutamate residues and results in a glycine chain on the gamma-carboxyl group.

Its subcellular location is the nucleus. Functionally, multifunctional protein working as a cell cycle progression factor as well as a cell survival factor. Required for the progression from the G1 to the S phase. Anti-apoptotic protein which functions as a caspase-3 inhibitor. Has no phosphatase 2A (PP2A) inhibitor activity. Exhibits histone chaperone properties, stimulating core histones to assemble into a nucleosome. The protein is Acidic leucine-rich nuclear phosphoprotein 32 family member B (ANP32B) of Ovis aries (Sheep).